The sequence spans 578 residues: Moesin/ezrin/radixin homolog 1 (578 aa).

An FERM domain is found at 1–296 (MSPKALNVRV…GNHELYMRRR (296 aa)). The interval 463–555 (ASTTPQHHHV…HRENVRQGRD (93 aa)) is disordered. Over residues 475–484 (DENENEEELT) the composition is skewed to acidic residues. The span at 492–555 (VSRDLDTDEH…HRENVRQGRD (64 aa)) shows a compositional bias: basic and acidic residues. T559 is modified (phosphothreonine).

Interacts with wgn. Interacts with Mer and arm at the adherens junction. Interacts with cytoskeletal actin at apical buds of microvilli in the precellularised embryo. Interacts with PCID2 (possibly via FERM domain). Phosphorylated on Thr-559. In the oocyte this phosphorylation is induced by phosphatidylinositol 4,5-bisphosphate (PtdIns[4,5]P(2)) generated by sktl.

Its subcellular location is the cell junction. The protein resides in the adherens junction. It is found in the cell projection. The protein localises to the microvillus. It localises to the rhabdomere. Its subcellular location is the cell membrane. The protein resides in the cytoplasm. It is found in the cytoskeleton. The protein localises to the cell cortex. It localises to the cilium. Its subcellular location is the flagellum. The protein resides in the nucleus. It is found in the nucleoplasm. The protein localises to the chromosome. Its function is as follows. Involved in connections of major cytoskeletal structures to the plasma membrane. Together with wgn, involved in control of axon targeting of R8 and R2-R5 photoreceptors, independent of egr. In the nucleus, recruited to sites of active transcription by RNA polymerase II where it has a role in nuclear mRNA export together with the mRNA export factor PCID2 and other messenger ribonucleoprotein (mRNP) particles. The sequence is that of Moesin/ezrin/radixin homolog 1 (Moe) from Drosophila melanogaster (Fruit fly).